A 76-amino-acid chain; its full sequence is Sec-independent protein translocase protein TatA (76 aa).

Residues 1-21 form a helical membrane-spanning segment; that stretch reads MGSFSIWHWLIVLLIVVLVFG. The disordered stretch occupies residues 44–76; the sequence is RDGSTAPADPAQQVTANKSADANTVDVEAKQKS. The span at 55–65 shows a compositional bias: polar residues; the sequence is QQVTANKSADA.

Belongs to the TatA/E family. The Tat system comprises two distinct complexes: a TatABC complex, containing multiple copies of TatA, TatB and TatC subunits, and a separate TatA complex, containing only TatA subunits. Substrates initially bind to the TatABC complex, which probably triggers association of the separate TatA complex to form the active translocon.

The protein localises to the cell inner membrane. Functionally, part of the twin-arginine translocation (Tat) system that transports large folded proteins containing a characteristic twin-arginine motif in their signal peptide across membranes. TatA could form the protein-conducting channel of the Tat system. This is Sec-independent protein translocase protein TatA from Methylibium petroleiphilum (strain ATCC BAA-1232 / LMG 22953 / PM1).